A 119-amino-acid polypeptide reads, in one-letter code: NADH-quinone oxidoreductase subunit A (119 aa).

3 helical membrane-spanning segments follow: residues 7 to 27 (FPVLLFIVVGVGLGLALMTIG), 63 to 83 (LIAILFILFDLETAFLFPWGV), and 88 to 108 (IGWPGFFAMGVFLLEFLVGFV).

It belongs to the complex I subunit 3 family. In terms of assembly, NDH-1 is composed of 14 different subunits. Subunits NuoA, H, J, K, L, M, N constitute the membrane sector of the complex.

It localises to the cell inner membrane. The enzyme catalyses a quinone + NADH + 5 H(+)(in) = a quinol + NAD(+) + 4 H(+)(out). Functionally, NDH-1 shuttles electrons from NADH, via FMN and iron-sulfur (Fe-S) centers, to quinones in the respiratory chain. The immediate electron acceptor for the enzyme in this species is believed to be ubiquinone. Couples the redox reaction to proton translocation (for every two electrons transferred, four hydrogen ions are translocated across the cytoplasmic membrane), and thus conserves the redox energy in a proton gradient. In Ralstonia pickettii (strain 12J), this protein is NADH-quinone oxidoreductase subunit A.